The sequence spans 541 residues: Calcium-dependent protein kinase 25 (541 aa).

The segment covering M1–A11 has biased composition (gly residues). Positions M1–R74 are disordered. G2 is lipidated: N-myristoyl glycine. The span at A38–P67 shows a compositional bias: low complexity. The Protein kinase domain occupies Y83–I341. ATP is bound by residues L89 to T97 and K112. The active-site Proton acceptor is the D207. The autoinhibitory domain stretch occupies residues A347–I377. EF-hand domains are found at residues E384–K419, F420–M455, D456–Y491, and A493–C526. D397, D399, S401, T403, E408, D433, D435, N437, E444, D469, D471, S473, Y475, E480, D504, N506, D508, R510, and E515 together coordinate Ca(2+).

Belongs to the protein kinase superfamily. Ser/Thr protein kinase family. CDPK subfamily. As to expression, specifically expressed in heading panicles, spikelets and mature pollen grains. Not expressed in vegetative tissues.

The protein resides in the membrane. It carries out the reaction L-seryl-[protein] + ATP = O-phospho-L-seryl-[protein] + ADP + H(+). It catalyses the reaction L-threonyl-[protein] + ATP = O-phospho-L-threonyl-[protein] + ADP + H(+). Activated by calcium. Autophosphorylation may play an important role in the regulation of the kinase activity. Functionally, may play a role in signal transduction pathways that involve calcium as a second messenger. The protein is Calcium-dependent protein kinase 25 of Oryza sativa subsp. japonica (Rice).